The sequence spans 86 residues: Large ribosomal subunit protein bL27 (86 aa).

Residues 1 to 26 (MAHKKAAGSTRNGRDSESKRLGVKRY) are disordered.

The protein belongs to the bacterial ribosomal protein bL27 family.

This is Large ribosomal subunit protein bL27 from Marinobacter nauticus (strain ATCC 700491 / DSM 11845 / VT8) (Marinobacter aquaeolei).